A 364-amino-acid polypeptide reads, in one-letter code: Ribosomal RNA large subunit methyltransferase M (364 aa).

Residues Ser-187, 220–223, Asp-239, Asp-259, and Asp-276 each bind S-adenosyl-L-methionine; that span reads CPGG. The active-site Proton acceptor is Lys-305.

This sequence belongs to the class I-like SAM-binding methyltransferase superfamily. RNA methyltransferase RlmE family. RlmM subfamily. As to quaternary structure, monomer.

The protein resides in the cytoplasm. It carries out the reaction cytidine(2498) in 23S rRNA + S-adenosyl-L-methionine = 2'-O-methylcytidine(2498) in 23S rRNA + S-adenosyl-L-homocysteine + H(+). Functionally, catalyzes the 2'-O-methylation at nucleotide C2498 in 23S rRNA. In Aeromonas salmonicida (strain A449), this protein is Ribosomal RNA large subunit methyltransferase M.